Here is a 688-residue protein sequence, read N- to C-terminus: Complement C1s-1 subcomponent (688 aa).

The N-terminal stretch at M1 to A15 is a signal peptide. Residues E16–I130 enclose the CUB 1 domain. E60, D68, D113, D131, I132, and E134 together coordinate Ca(2+). C65 and C83 are disulfide-bonded. The EGF-like; calcium-binding domain maps to D131 to G172. Cystine bridges form between C135-C147, C143-C156, and C158-C171. Residues N149, F150, and G153 each contribute to the Ca(2+) site. (3R)-3-hydroxyasparagine is present on N149. An N-linked (GlcNAc...) asparagine glycan is attached at N174. C175 and C202 are disulfide-bonded. Positions C175–D290 constitute a CUB 2 domain. Ca(2+)-binding residues include E226, D236, D275, G278, and Q279. The cysteines at positions 234 and 251 are disulfide-linked. Sushi domains follow at residues I292–P356 and V357–P423. 7 disulfide bridges follow: C294–C341, C321–C354, C359–C403, C386–C421, C425–C549, C595–C618, and C627–C659. One can recognise a Peptidase S1 domain in the interval I438–Q680. Residues H475 and D529 each act as charge relay system in the active site. S631 serves as the catalytic Charge relay system. N-linked (GlcNAc...) asparagine glycosylation occurs at N641.

This sequence belongs to the peptidase S1 family. Core component of the complement C1 complex, a calcium-dependent complex composed of 1 molecule of the C1Q subcomplex, 2 molecules of C1R and 2 molecules of C1S. The C1Q subcomplex is composed 18 subunits: 3 chains of C1QA, C1QB, and C1QC trimerize to form 6 collagen-like triple helices connected to six globular ligand-recognition modules. Post-translationally, cleaved and activated by C1R to generate Complement C1s subcomponent heavy and light chains. The iron and 2-oxoglutarate dependent 3-hydroxylation of aspartate and asparagine is (R) stereospecific within EGF domains. In terms of tissue distribution, predominantly expressed in liver.

Its subcellular location is the secreted. The protein localises to the cell surface. The catalysed reaction is Cleavage of Arg-|-Ala bond in complement component C4 to form C4a and C4b, and Lys(or Arg)-|-Lys bond in complement component C2 to form C2a and C2b: the 'classical' pathway C3 convertase.. Its activity is regulated as follows. Cleaved and activated by C1R. Immunoglobulin-binding promotes autoactivation of C1R, which results in the cleavage of the Arg-Ile bond in the catalytic domain. Inhibited by C1 inhibitor (SERPING1). Its function is as follows. Component of the complement C1 complex, a multiprotein complex that initiates the classical pathway of the complement system, a cascade of proteins that leads to phagocytosis and breakdown of pathogens and signaling that strengthens the adaptive immune system. C1S is activated following association of the C1 complex with immunoglobulins (IgG or IgM) complexed with antigens to form antigen-antibody complexes on the surface of pathogens. C1S is cleaved and activated by C1R to generate C1s subcomponent heavy and light chains. C1s subcomponent light chain then cleaves and activates C2 and C4, the next components of the classical complement pathway. In terms of biological role, serine protease component of the complement C1 complex, which catalyzes cleavage and activation of C2 and C4, the next components of the classical complement pathway. Also cleaves IGFBP5 and thereby inhibits the trophic effects of IGF1. This is Complement C1s-1 subcomponent from Mus musculus (Mouse).